We begin with the raw amino-acid sequence, 211 residues long: Large ribosomal subunit protein uL3 (211 aa).

The disordered stretch occupies residues Arg-130–Arg-154.

Belongs to the universal ribosomal protein uL3 family. In terms of assembly, part of the 50S ribosomal subunit. Forms a cluster with proteins L14 and L19.

In terms of biological role, one of the primary rRNA binding proteins, it binds directly near the 3'-end of the 23S rRNA, where it nucleates assembly of the 50S subunit. This chain is Large ribosomal subunit protein uL3, found in Lachnospira eligens (strain ATCC 27750 / DSM 3376 / VPI C15-48 / C15-B4) (Eubacterium eligens).